Consider the following 358-residue polypeptide: Probable cinnamyl alcohol dehydrogenase (358 aa).

Cys48 is a Zn(2+) binding site. Ser50 provides a ligand contact to NADP(+). 7 residues coordinate Zn(2+): His70, Glu71, Cys101, Cys104, Cys107, Cys115, and Cys164. NADP(+)-binding positions include Thr168, 189 to 194 (GLGGVG), 212 to 217 (SSSDKK), Thr252, Gly276, and 299 to 301 (SFV).

The protein belongs to the zinc-containing alcohol dehydrogenase family. Homodimer. The cofactor is Zn(2+). Most actively expressed in stem, hypocotyl and root tissue.

The enzyme catalyses (E)-cinnamyl alcohol + NADP(+) = (E)-cinnamaldehyde + NADPH + H(+). It catalyses the reaction (E)-coniferol + NADP(+) = (E)-coniferaldehyde + NADPH + H(+). The catalysed reaction is (E)-sinapyl alcohol + NADP(+) = (E)-sinapaldehyde + NADPH + H(+). It carries out the reaction (E)-4-coumaroyl alcohol + NADP(+) = (E)-4-coumaraldehyde + NADPH + H(+). The enzyme catalyses (E)-caffeyl alcohol + NADP(+) = (E)-caffeyl aldehyde + NADPH + H(+). It participates in aromatic compound metabolism; phenylpropanoid biosynthesis. Functionally, this protein catalyzes the final step in a branch of phenylpropanoid synthesis specific for production of lignin monomers. It acts on coniferyl-, sinapyl-, 4-coumaryl- and cinnamyl-alcohol. This Medicago sativa (Alfalfa) protein is Probable cinnamyl alcohol dehydrogenase (CAD2).